Here is a 308-residue protein sequence, read N- to C-terminus: tRNA uridine(34) hydroxylase (308 aa).

A Rhodanese domain is found at 128 to 222; that stretch reads ADENTVVVDT…YLEEVPREQS (95 aa). Cys-182 functions as the Cysteine persulfide intermediate in the catalytic mechanism.

It belongs to the TrhO family.

It catalyses the reaction uridine(34) in tRNA + AH2 + O2 = 5-hydroxyuridine(34) in tRNA + A + H2O. In terms of biological role, catalyzes oxygen-dependent 5-hydroxyuridine (ho5U) modification at position 34 in tRNAs. This Brucella suis biovar 1 (strain 1330) protein is tRNA uridine(34) hydroxylase.